Here is a 166-residue protein sequence, read N- to C-terminus: Endoribonuclease YbeY (166 aa).

Zn(2+) contacts are provided by His111, His115, and His121. Positions 141–166 are disordered; that stretch reads LGYPDPYAEDESADHPHSDTPSKDHE. The segment covering 153-166 has biased composition (basic and acidic residues); sequence ADHPHSDTPSKDHE.

Belongs to the endoribonuclease YbeY family. Requires Zn(2+) as cofactor.

Its subcellular location is the cytoplasm. Its function is as follows. Single strand-specific metallo-endoribonuclease involved in late-stage 70S ribosome quality control and in maturation of the 3' terminus of the 16S rRNA. The sequence is that of Endoribonuclease YbeY from Pseudomonas savastanoi pv. phaseolicola (strain 1448A / Race 6) (Pseudomonas syringae pv. phaseolicola (strain 1448A / Race 6)).